Here is a 470-residue protein sequence, read N- to C-terminus: Iron-sulfur cluster assembly protein SufB (470 aa).

The protein belongs to the iron-sulfur cluster assembly SufBD family. As to quaternary structure, component of a complex composed of SufB, SufC and SufD in a stoichiometric ratio of 1:2:1. Interacts with SufC. Interacts with SufD.

Its pathway is cofactor biosynthesis; iron-sulfur cluster biosynthesis. Participates in the sulfur mobilization (SUF) pathway for iron-sulfur (Fe-S) cluster biogenesis. As part of a complex consisting of SufB-SufC(2)-SufD, involved in assembly of [4Fe-4S] clusters. Exhibits ATPase activity. This Plasmodium falciparum (isolate 3D7) protein is Iron-sulfur cluster assembly protein SufB.